Consider the following 322-residue polypeptide: Germ cell-specific gene 1-like protein (322 aa).

Topologically, residues 1-8 (MKTSRRGR) are cytoplasmic. The chain crosses the membrane as a helical span at residues 9-29 (ALLAVALNLLALLFATTAFLT). The Extracellular portion of the chain corresponds to 30 to 122 (TYWCQGTQRV…FIDLAPASEK (93 aa)). A helical transmembrane segment spans residues 123-143 (GVLWLSVVSEVLYILLLVVGF). Topologically, residues 144-163 (SLMCLELLHSSSVIDGLKLN) are cytoplasmic. A helical transmembrane segment spans residues 164 to 184 (AFAAVFTVLSGLLGMVAHMMY). Topologically, residues 185–207 (TQVFQVTVSLGPEDWRPHSWDYG) are extracellular. A helical transmembrane segment spans residues 208 to 228 (WSFCLAWGSFTCCMAASVTTL). The Cytoplasmic segment spans residues 229-322 (NSYTKTVIEF…RQCWVLGHWV (94 aa)). Serine 274 carries the post-translational modification Phosphoserine.

It belongs to the GSG1 family. As to quaternary structure, component of the inner core of AMPAR complexes. AMPAR complexes consist of an inner core made of 4 pore-forming GluA/GRIA proteins (GRIA1, GRIA2, GRIA3 and GRIA4) and 4 major auxiliary subunits arranged in a twofold symmetry. One of the two pairs of distinct binding sites is occupied either by CNIH2, CNIH3 or CACNG2, CACNG3. The other harbors CACNG2, CACNG3, CACNG4, CACNG8 or GSG1L. This inner core of AMPAR complexes is complemented by outer core constituents binding directly to the GluA/GRIA proteins at sites distinct from the interaction sites of the inner core constituents. Outer core constituents include at least PRRT1, PRRT2, CKAMP44/SHISA9, FRRS1L and NRN1. The proteins of the inner and outer core serve as a platform for other, more peripherally associated AMPAR constituents. Alone or in combination, these auxiliary subunits control the gating and pharmacology of the AMPAR complexes and profoundly impact their biogenesis and protein processing. Expressed in the brain (at protein level).

The protein resides in the cell membrane. Its subcellular location is the synapse. Its function is as follows. As a component of the inner core of AMPAR complexes, modifies AMPA receptor (AMPAR) gating. The polypeptide is Germ cell-specific gene 1-like protein (Gsg1l) (Rattus norvegicus (Rat)).